The following is a 280-amino-acid chain: 4-diphosphocytidyl-2-C-methyl-D-erythritol kinase (280 aa).

K8 is an active-site residue. Position 91-101 (91-101) interacts with ATP; it reads PIEAGLAGGSS. Residue D133 is part of the active site.

Belongs to the GHMP kinase family. IspE subfamily.

The enzyme catalyses 4-CDP-2-C-methyl-D-erythritol + ATP = 4-CDP-2-C-methyl-D-erythritol 2-phosphate + ADP + H(+). It participates in isoprenoid biosynthesis; isopentenyl diphosphate biosynthesis via DXP pathway; isopentenyl diphosphate from 1-deoxy-D-xylulose 5-phosphate: step 3/6. Its function is as follows. Catalyzes the phosphorylation of the position 2 hydroxy group of 4-diphosphocytidyl-2C-methyl-D-erythritol. This is 4-diphosphocytidyl-2-C-methyl-D-erythritol kinase from Clostridium tetani (strain Massachusetts / E88).